Here is a 649-residue protein sequence, read N- to C-terminus: Glycerol-3-phosphate dehydrogenase, mitochondrial (649 aa).

69–97 (DVLIIGGGATGTGVAVDASTRGLNVCLLE) contacts FAD.

This sequence belongs to the FAD-dependent glycerol-3-phosphate dehydrogenase family. The cofactor is FAD.

Its subcellular location is the mitochondrion. The enzyme catalyses a quinone + sn-glycerol 3-phosphate = dihydroxyacetone phosphate + a quinol. It participates in polyol metabolism; glycerol degradation via glycerol kinase pathway; glycerone phosphate from sn-glycerol 3-phosphate (anaerobic route): step 1/1. In Schizosaccharomyces pombe (strain 972 / ATCC 24843) (Fission yeast), this protein is Glycerol-3-phosphate dehydrogenase, mitochondrial (gut2).